The sequence spans 504 residues: MSEVVTYEDALKDFEPIIGLEVHVELSTQTKLFSSAPNIAGPLASCASQGPNTLVTPVCLGLPGSLPTVNERAVDYGIALGLALGCSIADELIFARKNYFYPDLPKNYQISQFDSPLAYDGKLEVETESGDVFFVEIERAHLEEDAGKLAHKSSTGRIQGAQYSLIDYNRSGVPLVEIVSRPVFADRCAPQVARVFVELIREIVLSLGVSNARLERGNIRCDANVSLRPRGLGAGILPNRTETKNLNSLRSIERAIRYEIQRQATLISSGELVRQETRHWREDRGITLSGRVKADSHEYRYFPEPDLLPIPIPSDKVEAIRLSMPEHPLALRRRLKAEWKFSDLQFRDVLNSSVLKQVDETVRAGATPDGAKKWWTGEITRIASQRRCNASDLISPEAVAEIELLISKGILNDSLARKVLAAVIDESLSVQQAIEKYDLSLTESASVERVLEKVLSENQEVVQKVISGKTQAVGVLVGSCMKALGGKADASKLRQTILNRLLPR.

The protein belongs to the GatB/GatE family. GatB subfamily. As to quaternary structure, heterotrimer of A, B and C subunits.

The catalysed reaction is L-glutamyl-tRNA(Gln) + L-glutamine + ATP + H2O = L-glutaminyl-tRNA(Gln) + L-glutamate + ADP + phosphate + H(+). The enzyme catalyses L-aspartyl-tRNA(Asn) + L-glutamine + ATP + H2O = L-asparaginyl-tRNA(Asn) + L-glutamate + ADP + phosphate + 2 H(+). Allows the formation of correctly charged Asn-tRNA(Asn) or Gln-tRNA(Gln) through the transamidation of misacylated Asp-tRNA(Asn) or Glu-tRNA(Gln) in organisms which lack either or both of asparaginyl-tRNA or glutaminyl-tRNA synthetases. The reaction takes place in the presence of glutamine and ATP through an activated phospho-Asp-tRNA(Asn) or phospho-Glu-tRNA(Gln). This is Aspartyl/glutamyl-tRNA(Asn/Gln) amidotransferase subunit B from Tropheryma whipplei (strain Twist) (Whipple's bacillus).